A 1226-amino-acid chain; its full sequence is AF4/FMR2 family member 3 (1226 aa).

Positions 24 to 37 are enriched in basic and acidic residues; sequence RNALRRKERERRNQ. Disordered stretches follow at residues 24–65, 116–164, 197–299, 323–496, and 523–728; these read RNAL…GDEL, SRAQ…RATQ, ERPP…GETN, KVEP…SNQY, and IKST…SINA. The segment covering 42-52 has biased composition (polar residues); sequence DDGTFNSSYSL. Positions 123–132 are enriched in low complexity; sequence SSICSTTTST. Composition is skewed to polar residues over residues 251–261 and 334–344; these read LKSSSETSVHC and KDSQLVSSGHN. Residues 381–392 show a composition bias toward low complexity; it reads QQAAQRTALRAL. Residues 396–408 are compositionally biased toward polar residues; the sequence is AVVQQPNCRTSVP. Over residues 409–445 the composition is skewed to low complexity; the sequence is SSKGSSSSSSSGSSSSSSDSESSSGSDSETESSSSES. Over residues 485-496 the composition is skewed to polar residues; sequence QNESHGSESNQY. Positions 523–533 are enriched in basic and acidic residues; it reads IKSTCKEEQRP. 2 stretches are compositionally biased toward low complexity: residues 550–561 and 569–579; these read PPAAVAVAVSAA and CAPAENAPAPA. Residues 589–607 are compositionally biased toward basic and acidic residues; it reads RRTERTSAGDGANCHRPEE. The span at 668–678 shows a compositional bias: low complexity; it reads TESSSSSSSSD. Over residues 692-705 the composition is skewed to polar residues; the sequence is KAQTVAASASSGND. At Ser755 the chain carries Phosphoserine. Disordered stretches follow at residues 783–856, 879–964, and 1100–1138; these read PQEP…LSAN, PISP…RDCK, and AAQAPSPWGASGKSTGTPSPMSPNPSPASSVGSQGSLSN. A compositionally biased stretch (basic and acidic residues) spans 830 to 842; it reads REIKKSQGEKDSS. Positions 843 to 856 are enriched in polar residues; that stretch reads SRLATSTSNTLSAN. Position 881 is a phosphoserine (Ser881). Positions 894–909 are enriched in polar residues; that stretch reads EDLTSSSRPNGNSLFT.

The protein belongs to the AF4 family. In terms of tissue distribution, preferentially expressed in lymphoid tissues, highest levels being found in the thymus.

The protein resides in the nucleus. Putative transcription activator that may function in lymphoid development and oncogenesis. Binds, in vitro, to double-stranded DNA. This chain is AF4/FMR2 family member 3, found in Homo sapiens (Human).